We begin with the raw amino-acid sequence, 188 residues long: Putative glutamine amidotransferase-like protein YvdE homolog (188 aa).

In terms of domain architecture, Glutamine amidotransferase type-1 spans 17-188 (SPFWWNKVSY…IKDLGQGLQA (172 aa)).

This Lactococcus lactis subsp. cremoris (Streptococcus cremoris) protein is Putative glutamine amidotransferase-like protein YvdE homolog.